The primary structure comprises 409 residues: S-adenosylmethionine synthase (409 aa).

141-146 (GQGSAD) contacts ATP.

Belongs to the AdoMet synthase 2 family. It depends on Mg(2+) as a cofactor.

It catalyses the reaction L-methionine + ATP + H2O = S-adenosyl-L-methionine + phosphate + diphosphate. Its pathway is amino-acid biosynthesis; S-adenosyl-L-methionine biosynthesis; S-adenosyl-L-methionine from L-methionine: step 1/1. Catalyzes the formation of S-adenosylmethionine from methionine and ATP. The sequence is that of S-adenosylmethionine synthase from Hyperthermus butylicus (strain DSM 5456 / JCM 9403 / PLM1-5).